The following is a 260-amino-acid chain: CD40 ligand (260 aa).

Over 1-22 (MIETYSQPSPRSVATGLPASMK) the chain is Cytoplasmic. Residues 23–46 (IFMYLLTVFLITQMIGSVLFAVYL) form a helical; Signal-anchor for type II membrane protein membrane-spanning segment. At 47 to 260 (HRRLDKVEEE…GFSSFGLLKL (214 aa)) the chain is on the extracellular side. The region spanning 121-260 (IAAHVVSEAN…GFSSFGLLKL (140 aa)) is the THD domain. The cysteines at positions 177 and 217 are disulfide-linked. Residue N239 is glycosylated (N-linked (GlcNAc...) asparagine).

Belongs to the tumor necrosis factor family. Homotrimer. Interacts with CD28. CD40 ligand, soluble form: Exists as either a monomer or a homotrimer. Forms a ternary complex between CD40 and integrins for CD40-CD40LG signaling. The soluble form derives from the membrane form by proteolytic processing. In terms of tissue distribution, specifically expressed on activated CD4+ T-lymphocytes.

Its subcellular location is the cell membrane. The protein resides in the cell surface. The protein localises to the secreted. Its function is as follows. Cytokine that acts as a ligand to CD40/TNFRSF5. Costimulates T-cell proliferation and cytokine production. Its cross-linking on T-cells generates a costimulatory signal which enhances the production of IL4 and IL10 in conjunction with the TCR/CD3 ligation and CD28 costimulation. Induces the activation of NF-kappa-B. Induces the activation of kinases MAPK8 and PAK2 in T-cells. Mediates B-cell proliferation in the absence of co-stimulus as well as IgE production in the presence of IL4. Involved in immunoglobulin class switching. Acts as a ligand for integrins, specifically ITGA5:ITGB1 and ITGAV:ITGB3; both integrins and the CD40 receptor are required for activation of CD40-CD40LG signaling, which have cell-type dependent effects, such as B-cell activation, NF-kappa-B signaling and anti-apoptotic signaling. This Mus musculus (Mouse) protein is CD40 ligand (Cd40lg).